We begin with the raw amino-acid sequence, 108 residues long: Glutaredoxin-1 (108 aa).

The region spanning 3-106 (EEFVQQRLAN…DILLSIGVLR (104 aa)) is the Glutaredoxin domain. Cysteines 23 and 26 form a disulfide.

This sequence belongs to the glutaredoxin family.

It localises to the virion. Functionally, displays thioltransferase and dehydroascorbate reductase activities. In Cynomys gunnisoni (Gunnison's prairie dog), this protein is Glutaredoxin-1 (OPG075).